The primary structure comprises 158 residues: Cyclic pyranopterin monophosphate synthase (158 aa).

Residues 74-76 (MCH) and 112-113 (ME) each bind substrate. Aspartate 127 is a catalytic residue.

Belongs to the MoaC family. Homohexamer; trimer of dimers.

The catalysed reaction is (8S)-3',8-cyclo-7,8-dihydroguanosine 5'-triphosphate = cyclic pyranopterin phosphate + diphosphate. The protein operates within cofactor biosynthesis; molybdopterin biosynthesis. In terms of biological role, catalyzes the conversion of (8S)-3',8-cyclo-7,8-dihydroguanosine 5'-triphosphate to cyclic pyranopterin monophosphate (cPMP). The protein is Cyclic pyranopterin monophosphate synthase of Helicobacter pylori (strain HPAG1).